The chain runs to 215 residues: Cytochrome b6 (215 aa).

A helical membrane pass occupies residues 32 to 52; it reads IFYCLGGITLTCFLVQVATGF. Residue cysteine 35 coordinates heme c. Residues histidine 86 and histidine 100 each contribute to the heme b site. 3 helical membrane-spanning segments follow: residues 90–110, 116–136, and 186–206; these read ASMM…TGGF, LTWV…VTGY, and LHTF…FPMI. Heme b-binding residues include histidine 187 and histidine 202.

Belongs to the cytochrome b family. PetB subfamily. The 4 large subunits of the cytochrome b6-f complex are cytochrome b6, subunit IV (17 kDa polypeptide, PetD), cytochrome f and the Rieske protein, while the 4 small subunits are PetG, PetL, PetM and PetN. The complex functions as a dimer. Heme b serves as cofactor. Heme c is required as a cofactor.

Its subcellular location is the plastid. The protein resides in the chloroplast thylakoid membrane. Functionally, component of the cytochrome b6-f complex, which mediates electron transfer between photosystem II (PSII) and photosystem I (PSI), cyclic electron flow around PSI, and state transitions. The sequence is that of Cytochrome b6 from Solanum bulbocastanum (Wild potato).